A 293-amino-acid chain; its full sequence is Shikimate dehydrogenase (NADP(+)) (293 aa).

Shikimate contacts are provided by residues 20-22 (SLT) and Thr72. The active-site Proton acceptor is Lys76. 2 residues coordinate shikimate: Asn97 and Asp112. NADP(+) contacts are provided by residues 136-140 (GAGGA) and Ile230. Tyr232 contacts shikimate. Gly253 is an NADP(+) binding site.

This sequence belongs to the shikimate dehydrogenase family. Homodimer.

The catalysed reaction is shikimate + NADP(+) = 3-dehydroshikimate + NADPH + H(+). It participates in metabolic intermediate biosynthesis; chorismate biosynthesis; chorismate from D-erythrose 4-phosphate and phosphoenolpyruvate: step 4/7. Its function is as follows. Involved in the biosynthesis of the chorismate, which leads to the biosynthesis of aromatic amino acids. Catalyzes the reversible NADPH linked reduction of 3-dehydroshikimate (DHSA) to yield shikimate (SA). The polypeptide is Shikimate dehydrogenase (NADP(+)) (Pseudarthrobacter chlorophenolicus (strain ATCC 700700 / DSM 12829 / CIP 107037 / JCM 12360 / KCTC 9906 / NCIMB 13794 / A6) (Arthrobacter chlorophenolicus)).